Reading from the N-terminus, the 88-residue chain is Elongation factor 1-beta (88 aa).

It belongs to the EF-1-beta/EF-1-delta family.

Functionally, promotes the exchange of GDP for GTP in EF-1-alpha/GDP, thus allowing the regeneration of EF-1-alpha/GTP that could then be used to form the ternary complex EF-1-alpha/GTP/AAtRNA. In Methanosphaera stadtmanae (strain ATCC 43021 / DSM 3091 / JCM 11832 / MCB-3), this protein is Elongation factor 1-beta.